The chain runs to 486 residues: mRNA cap guanine-N(7) methyltransferase (486 aa).

The interval 1 to 92 (MAGGADLDEP…ADRKAARERA (92 aa)) is disordered. Composition is skewed to basic and acidic residues over residues 9–28 (EPPR…DSTH), 35–54 (VPRD…EPAR), and 82–92 (EADRKAARERA). The region spanning 135 to 486 (SRIKGLRSFN…FYVGFCFYKV (352 aa)) is the mRNA cap 0 methyltransferase domain. 144–145 (NN) is a binding site for mRNA. Residues lysine 148, glycine 177, aspartate 201, aspartate 247, 281-283 (MFC), and tyrosine 286 each bind S-adenosyl-L-methionine. Positions 333 to 351 (VEMKKKQAEAGDGSKKDDG) are enriched in basic and acidic residues. Positions 333–365 (VEMKKKQAEAGDGSKKDDGGDAEEGELDEPEVE) are disordered. Residues 352–363 (GDAEEGELDEPE) show a composition bias toward acidic residues.

It belongs to the class I-like SAM-binding methyltransferase superfamily. mRNA cap 0 methyltransferase family.

It is found in the nucleus. The enzyme catalyses a 5'-end (5'-triphosphoguanosine)-ribonucleoside in mRNA + S-adenosyl-L-methionine = a 5'-end (N(7)-methyl 5'-triphosphoguanosine)-ribonucleoside in mRNA + S-adenosyl-L-homocysteine. Responsible for methylating the 5'-cap structure of mRNAs. The polypeptide is mRNA cap guanine-N(7) methyltransferase (ABD1) (Pyricularia oryzae (strain 70-15 / ATCC MYA-4617 / FGSC 8958) (Rice blast fungus)).